The primary structure comprises 196 residues: 3-dehydroquinate dehydratase (196 aa).

Residues 23-25 (ELR) and Arg-45 contribute to the 3-dehydroquinate site. Residue His-98 is the Proton donor/acceptor of the active site. Lys-122 (schiff-base intermediate with substrate) is an active-site residue. 3-dehydroquinate contacts are provided by Arg-159 and Gln-182.

Belongs to the type-I 3-dehydroquinase family. In terms of assembly, homodimer.

It carries out the reaction 3-dehydroquinate = 3-dehydroshikimate + H2O. It functions in the pathway metabolic intermediate biosynthesis; chorismate biosynthesis; chorismate from D-erythrose 4-phosphate and phosphoenolpyruvate: step 3/7. Functionally, involved in the third step of the chorismate pathway, which leads to the biosynthesis of aromatic amino acids. Catalyzes the cis-dehydration of 3-dehydroquinate (DHQ) and introduces the first double bond of the aromatic ring to yield 3-dehydroshikimate. The protein is 3-dehydroquinate dehydratase of Archaeoglobus fulgidus (strain ATCC 49558 / DSM 4304 / JCM 9628 / NBRC 100126 / VC-16).